The following is a 956-amino-acid chain: Pollen-specific leucine-rich repeat extensin-like protein 1 (956 aa).

A signal peptide spans 1–30 (MTRRTMEKPFGCFLLLFCFTISIFFYSAAA). LRR repeat units lie at residues 39–59 (LTRR…DIEY), 60–84 (EVDL…AWKK), 119–143 (VLVV…LGLL), 144–166 (TDVA…SLSK), 168–191 (TLMY…ALSW), 192–215 (PSLK…IFDK), 217–238 (LDAI…IGKS), 240–261 (ASVV…IGQM), 262–285 (KNLN…IGSL), 287–309 (NVTV…LSGL), and 310–332 (ANVE…NICK). Residues N273 and N287 are each glycosylated (N-linked (GlcNAc...) asparagine). N338 carries an N-linked (GlcNAc...) asparagine glycan. The span at 355–377 (PGSSQEKQFDDTSNCLQNRPNQK) shows a compositional bias: polar residues. Disordered regions lie at residues 355–380 (PGSS…KSAK) and 397–956 (CAGG…FPGY). Residues 408–417 (SPKPTPTPKA) are compositionally biased toward pro residues. Composition is skewed to basic and acidic residues over residues 431–441 (EPSKPKPEESP) and 452–534 (TPSH…EESP). A compositionally biased stretch (pro residues) spans 640–830 (QSPPVHSPPP…KPVTPLPPAT (191 aa)). Residues 651 to 956 (PPVHSPPPPV…SPPPPMFPGY (306 aa)) form a contains the Ser-Pro(4) repeats region. The span at 837–852 (PTPSSSESGEISTPVQ) shows a compositional bias: polar residues. The span at 947–956 (SPPPPMFPGY) shows a compositional bias: pro residues.

Hydroxylated on proline residues in the S-P-P-P-P repeat. Post-translationally, O-glycosylated on hydroxyprolines. Expressed in flowers, stamen, pollen, and pollinated carpels.

It localises to the secreted. It is found in the cell wall. Its function is as follows. Modulates cell morphogenesis by regulating cell wall formation and assembly, and/or growth polarization. The protein is Pollen-specific leucine-rich repeat extensin-like protein 1 (PEX1) of Arabidopsis thaliana (Mouse-ear cress).